A 407-amino-acid polypeptide reads, in one-letter code: 1-deoxy-D-xylulose 5-phosphate reductoisomerase (407 aa).

Positions 22, 23, 24, 25, 48, 51, and 128 each coordinate NADPH. 1-deoxy-D-xylulose 5-phosphate is bound at residue K129. E130 is a binding site for NADPH. Position 152 (D152) interacts with Mn(2+). 1-deoxy-D-xylulose 5-phosphate is bound by residues S153, E154, S178, and H201. E154 provides a ligand contact to Mn(2+). G207 contributes to the NADPH binding site. Residues S214, N219, K220, and E223 each coordinate 1-deoxy-D-xylulose 5-phosphate. Position 223 (E223) interacts with Mn(2+).

This sequence belongs to the DXR family. It depends on Mg(2+) as a cofactor. Mn(2+) is required as a cofactor.

The catalysed reaction is 2-C-methyl-D-erythritol 4-phosphate + NADP(+) = 1-deoxy-D-xylulose 5-phosphate + NADPH + H(+). The protein operates within isoprenoid biosynthesis; isopentenyl diphosphate biosynthesis via DXP pathway; isopentenyl diphosphate from 1-deoxy-D-xylulose 5-phosphate: step 1/6. In terms of biological role, catalyzes the NADPH-dependent rearrangement and reduction of 1-deoxy-D-xylulose-5-phosphate (DXP) to 2-C-methyl-D-erythritol 4-phosphate (MEP). In Mycobacterium avium (strain 104), this protein is 1-deoxy-D-xylulose 5-phosphate reductoisomerase.